The chain runs to 616 residues: Chaperone protein HscA (616 aa).

It belongs to the heat shock protein 70 family.

In terms of biological role, chaperone involved in the maturation of iron-sulfur cluster-containing proteins. Has a low intrinsic ATPase activity which is markedly stimulated by HscB. Involved in the maturation of IscU. In Klebsiella pneumoniae subsp. pneumoniae (strain ATCC 700721 / MGH 78578), this protein is Chaperone protein HscA.